The chain runs to 309 residues: NAD kinase (309 aa).

D89 serves as the catalytic Proton acceptor. NAD(+)-binding positions include 89 to 90, 163 to 164, H174, R191, D193, and 204 to 209; these read DG, NE, and TAYSLS.

The protein belongs to the NAD kinase family. It depends on a divalent metal cation as a cofactor.

The protein localises to the cytoplasm. The catalysed reaction is NAD(+) + ATP = ADP + NADP(+) + H(+). Its function is as follows. Involved in the regulation of the intracellular balance of NAD and NADP, and is a key enzyme in the biosynthesis of NADP. Catalyzes specifically the phosphorylation on 2'-hydroxyl of the adenosine moiety of NAD to yield NADP. This chain is NAD kinase, found in Shewanella frigidimarina (strain NCIMB 400).